Reading from the N-terminus, the 33-residue chain is Gastrin (33 aa).

Pyrrolidone carboxylic acid occurs at positions 1 and 18. Sulfotyrosine is present on Y28. F33 carries the phenylalanine amide modification.

Belongs to the gastrin/cholecystokinin family.

It is found in the secreted. Functionally, gastrin stimulates the stomach mucosa to produce and secrete hydrochloric acid and the pancreas to secrete its digestive enzymes. It also stimulates smooth muscle contraction and increases blood circulation and water secretion in the stomach and intestine. In Didelphis virginiana (North American opossum), this protein is Gastrin (GAST).